The primary structure comprises 463 residues: Asparagine--tRNA ligase (463 aa).

This sequence belongs to the class-II aminoacyl-tRNA synthetase family. Homodimer.

The protein resides in the cytoplasm. It carries out the reaction tRNA(Asn) + L-asparagine + ATP = L-asparaginyl-tRNA(Asn) + AMP + diphosphate + H(+). This chain is Asparagine--tRNA ligase, found in Clostridium botulinum (strain ATCC 19397 / Type A).